Reading from the N-terminus, the 125-residue chain is Small ribosomal subunit protein uS12 (125 aa).

The tract at residues 1-31 is disordered; the sequence is MPTINQLVRHGRQTEVTKSKSPAMQGGPQRR. At aspartate 89 the chain carries 3-methylthioaspartic acid. Residues 105 to 125 are disordered; sequence QGVKDRKQSRSKYGAKRPKKA. The segment covering 113–125 has biased composition (basic residues); that stretch reads SRSKYGAKRPKKA.

It belongs to the universal ribosomal protein uS12 family. In terms of assembly, part of the 30S ribosomal subunit. Contacts proteins S8 and S17. May interact with IF1 in the 30S initiation complex.

Functionally, with S4 and S5 plays an important role in translational accuracy. In terms of biological role, interacts with and stabilizes bases of the 16S rRNA that are involved in tRNA selection in the A site and with the mRNA backbone. Located at the interface of the 30S and 50S subunits, it traverses the body of the 30S subunit contacting proteins on the other side and probably holding the rRNA structure together. The combined cluster of proteins S8, S12 and S17 appears to hold together the shoulder and platform of the 30S subunit. The protein is Small ribosomal subunit protein uS12 of Methylibium petroleiphilum (strain ATCC BAA-1232 / LMG 22953 / PM1).